The primary structure comprises 566 residues: Mitochondrial distribution and morphology protein 34 (566 aa).

The region spanning Met1–Leu195 is the SMP-LTD domain. Disordered regions lie at residues Pro212–Gly237, Gly349–Val401, Pro432–Thr518, and Lys539–Gln566. Basic residues predominate over residues Arg358–Arg370. Positions Thr380–Val401 are enriched in polar residues. Over residues Pro444–Arg454 the composition is skewed to basic and acidic residues.

The protein belongs to the MDM34 family. In terms of assembly, component of the ER-mitochondria encounter structure (ERMES) or MDM complex, composed of mmm1, mdm10, mdm12 and mdm34.

It localises to the mitochondrion outer membrane. Its function is as follows. Component of the ERMES/MDM complex, which serves as a molecular tether to connect the endoplasmic reticulum (ER) and mitochondria. Components of this complex are involved in the control of mitochondrial shape and protein biogenesis, and function in nonvesicular lipid trafficking between the ER and mitochondria. Mdm34 is required for the interaction of the ER-resident membrane protein mmm1 and the outer mitochondrial membrane-resident beta-barrel protein mdm10. The polypeptide is Mitochondrial distribution and morphology protein 34 (Aspergillus flavus (strain ATCC 200026 / FGSC A1120 / IAM 13836 / NRRL 3357 / JCM 12722 / SRRC 167)).